The sequence spans 520 residues: MTDDEMYEDYDVDDDSAEESGNESLDDTEYDDAATQEFDFDENQPQRSLGKLTRQKSFEVLNKDDLFSESHKIIKEVKDVLSIPSEAAVSTLLRHMKWNKEKLIERYMENPEKLCIDAGVPNVMKLNATIVEKSGNVSCLICLEDYPPTQTFALICNHRYCLPCYKNYLEIKVSEGPECIYTPCPAPKCKVIVHQDAFKQIVSPEVFERFNNFILKSYVDDNPQVKWCPAPGCIYSIRCDRKERKEAVNCKCGFQYCFNCNDYEIGDHMPCPCSQVDKWLQKASDESENVTWMLANTKKCPECRSPIEKNGGCMHMTCRKNAGGCGFEFCWLCRGPWTEHGSTTGGYYNCNKYDKSKAKEDDDKAHDAKTELEAYMFYYHRYESHRNAMKIADEQRRNAHLKEQQILSKFDVRSADTKFLMEATEQLLKNRRVLQYSYVYGYYLDKKSQERNLFEYLQEDLEKHTNLLSTQYEQSLDKLEDYQAFIKWKEQVTNYTRITKKFLDNFVDGVAGGLVNTQIN.

Acidic residues predominate over residues 1–42; it reads MTDDEMYEDYDVDDDSAEESGNESLDDTEYDDAATQEFDFDE. Residues 1 to 51 form a disordered region; that stretch reads MTDDEMYEDYDVDDDSAEESGNESLDDTEYDDAATQEFDFDENQPQRSLGK. Residues 135–354 are TRIAD supradomain; it reads GNVSCLICLE…GGYYNCNKYD (220 aa). Zn(2+)-binding residues include Cys139, Cys142, Cys156, His158, Cys161, Cys164, Cys184, Cys189, Cys228, Cys233, Cys250, Cys252, Cys257, Cys260, His268, Cys273, Cys300, and Cys303. The RING-type 1 zinc finger occupies 139 to 189; that stretch reads CLICLEDYPPTQTFALICNHRYCLPCYKNYLEIKVSEGPECIYTPCPAPKC. The segment at 208–273 adopts an IBR-type zinc-finger fold; it reads ERFNNFILKS…EIGDHMPCPC (66 aa). Residues 300–333 form an RING-type 2; atypical zinc finger; the sequence is CPECRSPIEKNGGCMHMTCRKNAGGCGFEFCWLC. Cys313 is an active-site residue. Cys318, Cys325, Cys330, Cys333, His340, and Cys350 together coordinate Zn(2+).

This sequence belongs to the RBR family.

The enzyme catalyses [E2 ubiquitin-conjugating enzyme]-S-ubiquitinyl-L-cysteine + [acceptor protein]-L-lysine = [E2 ubiquitin-conjugating enzyme]-L-cysteine + [acceptor protein]-N(6)-ubiquitinyl-L-lysine.. The protein operates within protein modification; protein ubiquitination. Its function is as follows. Might act as an E3 ubiquitin-protein ligase. Appears to be required for normal cell-type proportioning and cell sorting during multicellular development. In addition to being necessary for a normal percentage of prestalk cells and the organization of the slug, rbrA is also necessary for spore cell viability. The sequence is that of Probable E3 ubiquitin-protein ligase rbrA (rbrA) from Dictyostelium discoideum (Social amoeba).